We begin with the raw amino-acid sequence, 207 residues long: Protein GrpE (207 aa).

Positions 1–31 are disordered; the sequence is MSEHQTPPEEDLTVANGDSAEAVSEPDVTVA.

Belongs to the GrpE family. As to quaternary structure, homodimer.

The protein localises to the cytoplasm. Functionally, participates actively in the response to hyperosmotic and heat shock by preventing the aggregation of stress-denatured proteins, in association with DnaK and GrpE. It is the nucleotide exchange factor for DnaK and may function as a thermosensor. Unfolded proteins bind initially to DnaJ; upon interaction with the DnaJ-bound protein, DnaK hydrolyzes its bound ATP, resulting in the formation of a stable complex. GrpE releases ADP from DnaK; ATP binding to DnaK triggers the release of the substrate protein, thus completing the reaction cycle. Several rounds of ATP-dependent interactions between DnaJ, DnaK and GrpE are required for fully efficient folding. The protein is Protein GrpE of Synechococcus elongatus (strain ATCC 33912 / PCC 7942 / FACHB-805) (Anacystis nidulans R2).